We begin with the raw amino-acid sequence, 460 residues long: ESX-1 secretion-associated protein EspB (460 aa).

Disordered regions lie at residues 92–116, 303–335, and 405–441; these read LDNDGEGTVQAESAGAVGGDSSAEL, PSDGSGVTPGTGMPAAPMVPPTGSPGGGLPADT, and LGGGGMGMPMGAAHQGQGGAKSKGSQQEDEALYTEDR.

In terms of processing, cleaved in the C-terminal region by MycP1.

The protein resides in the secreted. The protein is ESX-1 secretion-associated protein EspB of Mycobacterium tuberculosis (strain CDC 1551 / Oshkosh).